The chain runs to 811 residues: Probable disease resistance protein At5g04720 (811 aa).

One can recognise an RPW8 domain in the interval M1 to G147. NB-ARC domains lie at V180–S242 and T312–V437. G207–T214 lines the ATP pocket. 5 LRR repeats span residues F650–I674, S676–K699, A700–L722, R724–V746, and T748–L769.

Belongs to the disease resistance NB-LRR family.

Its function is as follows. Probable disease resistance protein. The sequence is that of Probable disease resistance protein At5g04720 from Arabidopsis thaliana (Mouse-ear cress).